The primary structure comprises 372 residues: Innexin shaking-B (372 aa).

At 1–21 the chain is on the cytoplasmic side; the sequence is MLDIFRGLKNLVKVSHVKTDS. A helical membrane pass occupies residues 22–42; it reads IVFRLHYSITVMILMSFSLII. The Extracellular portion of the chain corresponds to 43–110; the sequence is TTRQYVGNPI…PADKKHYKYY (68 aa). Residues 111 to 131 form a helical membrane-spanning segment; that stretch reads QWVCFCLFFQAILFYTPRWLW. Topologically, residues 132 to 182 are cytoplasmic; that stretch reads KSWEGGKIHALIMDLDIGICSEAEKKQKKKLLLDYLWENLRYHNWWAYRYY. A helical membrane pass occupies residues 183–203; it reads VCELLALINVIGQMFLMNRFF. Residues 204-267 are Extracellular-facing; sequence DGEFITFGLK…ILPLNVVNEK (64 aa). A helical transmembrane segment spans residues 268–288; that stretch reads IYIFLWFWFILLTFLTLLTLI. The Cytoplasmic portion of the chain corresponds to 289 to 372; sequence YRVVIIFSPR…PGLKGEIQDA (84 aa).

It belongs to the pannexin family. Monomer (isoform Lethal). As to expression, isoform Neural is expressed in synapses of giant fibers (GF), in a large thoracic cell in location of postsynaptic target and optic lobe lamina and medulla. Isoform Lethal is expressed in embryonic mesodermal derivatives. During metamorphosis, both isoforms are dynamically expressed in pupal nervous system.

Its subcellular location is the cell membrane. It localises to the cell junction. The protein localises to the gap junction. Its function is as follows. Structural component of the gap junctions at electrical synapses in distal and mid-depth levels in the lamina. Isoform Lethal forms voltage sensitive intercellular channels through homotypic interactions. The chain is Innexin shaking-B (shakB) from Drosophila melanogaster (Fruit fly).